Here is a 362-residue protein sequence, read N- to C-terminus: Molybdenum import ATP-binding protein ModC (362 aa).

The 235-residue stretch at 2 to 236 (ASPIEVRLHM…LDLPLAMGGD (235 aa)) folds into the ABC transporter domain. 34-41 (GPSGSGKT) provides a ligand contact to ATP. The 66-residue stretch at 297 to 362 (QSSILNRLPV…AQIKAVAVLA (66 aa)) folds into the Mop domain.

It belongs to the ABC transporter superfamily. Molybdate importer (TC 3.A.1.8) family. The complex is composed of two ATP-binding proteins (ModC), two transmembrane proteins (ModB) and a solute-binding protein (ModA).

Its subcellular location is the cell inner membrane. It carries out the reaction molybdate(out) + ATP + H2O = molybdate(in) + ADP + phosphate + H(+). In terms of biological role, part of the ABC transporter complex ModABC involved in molybdenum import. Responsible for energy coupling to the transport system. The protein is Molybdenum import ATP-binding protein ModC of Pseudomonas savastanoi pv. phaseolicola (strain 1448A / Race 6) (Pseudomonas syringae pv. phaseolicola (strain 1448A / Race 6)).